The primary structure comprises 400 residues: Probable vacuolar protease A (400 aa).

The N-terminal stretch at 1 to 18 (MKGSLLLAGATLLGCTSA) is a signal peptide. The propeptide at 19–72 (KLHSLKLKKVSLKEQLEHADIDVQIKSLGQKYMGIRPEQHEQQMFKEQTPIEAE) is activation peptide. The region spanning 87 to 397 (YFSEISIGTP…DLGKGTVGLA (311 aa)) is the Peptidase A1 domain. Residue Asp105 is part of the active site. Cysteines 118 and 123 form a disulfide. N-linked (GlcNAc...) asparagine glycosylation occurs at Asn140. The active site involves Asp289. Cys323 and Cys356 are disulfide-bonded. N-linked (GlcNAc...) asparagine glycosylation occurs at Asn340.

This sequence belongs to the peptidase A1 family.

Its subcellular location is the vacuole lumen. The protein resides in the secreted. The catalysed reaction is Hydrolysis of proteins with broad specificity for peptide bonds. Cleaves -Leu-Leu-|-Val-Tyr- bond in a synthetic substrate. Does not act on esters of Tyr or Arg.. In terms of biological role, vacuolar aspartic endopeptidase which is probably also secreted and contributes to virulence. The polypeptide is Probable vacuolar protease A (PEP2) (Trichophyton verrucosum (strain HKI 0517)).